Here is a 474-residue protein sequence, read N- to C-terminus: PRAME family member 13 (474 aa).

One copy of the LRR 1; degenerate repeat lies at 97–124; it reads RRKLQVLDLRDVDENFWARWPGAWALSC. The stretch at 179–203 is one LRR 2; degenerate repeat; it reads HLCCSKLVNYLTPIKHLRKSLKIIY. The stretch at 204–230 is one LRR 3; degenerate repeat; sequence LNSIQELEIHNMSWPRLIRKLRCYLKE. The stretch at 231-265 is one LRR 4; degenerate repeat; that stretch reads MKTLGKLVFSRCHHSTSDNELEGRLVTKFSSVFLG. LRR repeat units lie at residues 266–291, 292–323, 324–342, 348–375, and 376–400; these read LEHL…IRCL, QNPL…GYLK, HLNL…PLGA, AASL…GLSR, and CSQL…LLRH.

The protein belongs to the PRAME family.

The polypeptide is PRAME family member 13 (Homo sapiens (Human)).